Here is a 289-residue protein sequence, read N- to C-terminus: ATP synthase gamma chain (289 aa).

This sequence belongs to the ATPase gamma chain family. As to quaternary structure, F-type ATPases have 2 components, CF(1) - the catalytic core - and CF(0) - the membrane proton channel. CF(1) has five subunits: alpha(3), beta(3), gamma(1), delta(1), epsilon(1). CF(0) has three main subunits: a, b and c.

The protein localises to the cell inner membrane. Produces ATP from ADP in the presence of a proton gradient across the membrane. The gamma chain is believed to be important in regulating ATPase activity and the flow of protons through the CF(0) complex. This is ATP synthase gamma chain from Polynucleobacter asymbioticus (strain DSM 18221 / CIP 109841 / QLW-P1DMWA-1) (Polynucleobacter necessarius subsp. asymbioticus).